A 264-amino-acid chain; its full sequence is 3-methyl-2-oxobutanoate hydroxymethyltransferase (264 aa).

2 residues coordinate Mg(2+): D45 and D84. Residues 45–46 (DS), D84, and K112 each bind 3-methyl-2-oxobutanoate. E114 is a binding site for Mg(2+). The active-site Proton acceptor is E181.

The protein belongs to the PanB family. Homodecamer; pentamer of dimers. Mg(2+) serves as cofactor.

The protein localises to the cytoplasm. It carries out the reaction 3-methyl-2-oxobutanoate + (6R)-5,10-methylene-5,6,7,8-tetrahydrofolate + H2O = 2-dehydropantoate + (6S)-5,6,7,8-tetrahydrofolate. The protein operates within cofactor biosynthesis; (R)-pantothenate biosynthesis; (R)-pantoate from 3-methyl-2-oxobutanoate: step 1/2. Catalyzes the reversible reaction in which hydroxymethyl group from 5,10-methylenetetrahydrofolate is transferred onto alpha-ketoisovalerate to form ketopantoate. The polypeptide is 3-methyl-2-oxobutanoate hydroxymethyltransferase (Vibrio atlanticus (strain LGP32) (Vibrio splendidus (strain Mel32))).